The primary structure comprises 532 residues: P granule abnormality protein 2 (532 aa).

As to quaternary structure, interacts with pgl-1 and pgl-3; association with either pgl-1 or pgl-3 is not required for P-granule localization. In terms of tissue distribution, highly expressed in the germline.

It is found in the cytoplasmic granule. Its function is as follows. Transient component of P-granule which is involved in germline development. This chain is P granule abnormality protein 2, found in Caenorhabditis elegans.